We begin with the raw amino-acid sequence, 164 residues long: C-phycoerythrin alpha chain (164 aa).

Cys82 and Cys139 together coordinate (2R,3E)-phycoerythrobilin.

It belongs to the phycobiliprotein family. Heterodimer of an alpha and a beta chain. In terms of processing, contains two covalently linked bilin chromophores.

The protein resides in the cellular thylakoid membrane. Functionally, light-harvesting photosynthetic bile pigment-protein from the phycobiliprotein complex. The polypeptide is C-phycoerythrin alpha chain (cpeA) (Synechocystis sp. (strain PCC 6701)).